The chain runs to 515 residues: Glucose-6-phosphate 1-dehydrogenase (515 aa).

An N-acetylalanine modification is found at A2. Residue S8 is modified to Phosphoserine. T10 carries the post-translational modification Phosphothreonine. G38–K45 is a binding site for NADP(+). K89 bears the N6-acetyllysine mark. 2 residues coordinate NADP(+): Y147 and K171. Residues K171, H201–K205, E239, and E258 each bind D-glucose 6-phosphate. K171 carries the N6-(2-hydroxyisobutyryl)lysine; alternate modification. Position 171 is an N6-acetyllysine; alternate (K171). R357 provides a ligand contact to NADP(+). D-glucose 6-phosphate contacts are provided by K360 and R365. NADP(+)-binding residues include K366, R370, and R393. Residue Q395 participates in D-glucose 6-phosphate binding. NADP(+) is bound by residues Y401 to K403 and D421 to T423. K403 carries the post-translational modification N6-acetyllysine. K432 bears the N6-acetyllysine mark. Residue R487 participates in NADP(+) binding. K497 bears the N6-acetyllysine mark. NADP(+) contacts are provided by Y503 and W509. Phosphotyrosine is present on Y503.

This sequence belongs to the glucose-6-phosphate dehydrogenase family. In terms of assembly, homotetramer; dimer of dimers. Interacts with SIRT2; the interaction is enhanced by H(2)O(2) treatment. Forms a ternary complex with ALDOB and TP53; this interaction is direct. ALDOB stabilizes the complex inhibiting G6PD activity and keeping oxidative pentose phosphate metabolism in check. Acetylated by ELP3 at Lys-403; acetylation inhibits its homodimerization and enzyme activity. Deacetylated by SIRT2 at Lys-403; deacetylation stimulates its enzyme activity.

It localises to the cytoplasm. The protein localises to the cytosol. The protein resides in the membrane. The catalysed reaction is D-glucose 6-phosphate + NADP(+) = 6-phospho-D-glucono-1,5-lactone + NADPH + H(+). Its pathway is carbohydrate degradation; pentose phosphate pathway; D-ribulose 5-phosphate from D-glucose 6-phosphate (oxidative stage): step 1/3. Its function is as follows. Cytosolic glucose-6-phosphate dehydrogenase that catalyzes the first and rate-limiting step of the oxidative branch within the pentose phosphate pathway/shunt, an alternative route to glycolysis for the dissimilation of carbohydrates and a major source of reducing power and metabolic intermediates for fatty acid and nucleic acid biosynthetic processes. The chain is Glucose-6-phosphate 1-dehydrogenase (G6PD) from Bos indicus (Zebu).